A 248-amino-acid polypeptide reads, in one-letter code: Probable transcriptional regulatory protein Msil_2305 (248 aa).

Belongs to the TACO1 family.

It localises to the cytoplasm. The sequence is that of Probable transcriptional regulatory protein Msil_2305 from Methylocella silvestris (strain DSM 15510 / CIP 108128 / LMG 27833 / NCIMB 13906 / BL2).